A 274-amino-acid polypeptide reads, in one-letter code: Receptor-like protein 44 (274 aa).

The signal sequence occupies residues 1 to 24 (MTRSHRLLLLLLLIFQTAQRLTTA). The Extracellular segment spans residues 25 to 223 (DPNDEACLKN…PLQEMMMKSK (199 aa)). N-linked (GlcNAc...) asparagine glycans are attached at residues N48, N82, and N95. 4 LRR repeats span residues 96 to 121 (CTNL…QYLV), 123 to 144 (LAVL…LALC), 145 to 168 (AYLN…LGLL), and 169 to 192 (ARLS…LSNR). An N-linked (GlcNAc...) asparagine glycan is attached at N127. N-linked (GlcNAc...) asparagine glycosylation is found at N191 and N200. Residues 224-244 (GLSVMAIVGIGLGSGIASLMI) traverse the membrane as a helical segment. Residues 245–274 (SFTGVCLWLRITEKKIVEEEGKISQSMPDY) are Cytoplasmic-facing.

Belongs to the RLP family.

It is found in the cell membrane. The sequence is that of Receptor-like protein 44 from Arabidopsis thaliana (Mouse-ear cress).